We begin with the raw amino-acid sequence, 201 residues long: uncharacterized protein (201 aa).

Interacts with the chaperones HSP82 and HSC82.

This is an uncharacterized protein from Saccharomyces cerevisiae (strain ATCC 204508 / S288c) (Baker's yeast).